A 570-amino-acid polypeptide reads, in one-letter code: Protein misato homolog 1 (570 aa).

Serine 495 carries the phosphoserine modification.

It belongs to the misato family. Present in all cell lines tested (at protein level). Widely expressed.

It is found in the mitochondrion outer membrane. Its subcellular location is the cytoplasm. Involved in the regulation of mitochondrial distribution and morphology. Required for mitochondrial fusion and mitochondrial network formation. The sequence is that of Protein misato homolog 1 (MSTO1) from Homo sapiens (Human).